We begin with the raw amino-acid sequence, 428 residues long: MGAATTGFPIKAAVIHFTALSRHEQYIVSRALCALRTQPRRAQVVRRRVSNLKRLVRAMRSYSGADGADVERFGKGTVTDLADAGRFLFLPARVALRRGYLIAKIQTFAFLTQEVTRVALAEYLVQELRQVQFALVCMLMTEDLYLSLMEQEHVPARLKTAVTHALVALWEQRPDERARRATSALHQVWCAREHLAPSFGSMLGSSELFLLSTELDEMWRDFLVQRLSEAGVCTALEEFLFGISHEQIQAIRLQLRAQGVAALSRQEAYALIGEKGGGENTQAHAYQRVADLCSFYRSFIIRKRDAQARLRLNMPGPVRTIEEHYVEYLFFRQGKPVLYINVRAAPSTKSFPLGKVCRVETSGQHLLFFHTPSPEASPRAPAWKAGCAKSTLSEGAVFVRLLVLPIRRSALALACLRARVRAPRTDVA.

This is an uncharacterized protein from Treponema pallidum (strain Nichols).